The primary structure comprises 87 residues: HssA/B-like protein 55 (87 aa).

Over residues 1-13 (MTILSAITSISRP) the composition is skewed to polar residues. The interval 1–31 (MTILSAITSISRPNKSSKSVVSSNGGSSLSM) is disordered. Low complexity predominate over residues 14–31 (NKSSKSVVSSNGGSSLSM).

The protein belongs to the hssA/B family.

The polypeptide is HssA/B-like protein 55 (hssl55) (Dictyostelium discoideum (Social amoeba)).